The primary structure comprises 341 residues: Processive diacylglycerol beta-glycosyltransferase (341 aa).

This sequence belongs to the glycosyltransferase 2 family. Mg(2+) serves as cofactor.

It is found in the cell membrane. It carries out the reaction a 1,2-diacyl-sn-glycerol + UDP-alpha-D-glucose = a 1,2-diacyl-3-O-(beta-D-glucopyranosyl)-sn-glycerol + UDP + H(+). It catalyses the reaction a 1,2-diacyl-sn-glycerol + UDP-alpha-D-galactose = a 1,2-diacyl-3-O-(beta-D-galactosyl)-sn-glycerol + UDP + H(+). The enzyme catalyses a 1,2-diacyl-3-O-(beta-D-galactosyl)-sn-glycerol + UDP-alpha-D-glucose = a 1,2-diacyl-3-O-[beta-D-glucopyranosyl-(1-&gt;6)-beta-D-galactopyranosyl]-sn-glycerol + UDP + H(+). The catalysed reaction is a 1,2-diacyl-3-O-(beta-D-galactosyl)-sn-glycerol + UDP-alpha-D-galactose = a 1,2-diacyl-3-O-[beta-D-galactosyl-(1-&gt;6)-beta-D-galactosyl]-sn-glycerol + UDP + H(+). Its activity is regulated as follows. Activated by the negatively charged lipid phosphatidylglycerol (PG). In terms of biological role, processive glycosyltransferase involved in the biosynthesis of both the non-bilayer-prone beta-monoglycosyldiacylglycerol and the bilayer-forming membrane lipid glucosyl-galactosyldiacylglycerol and digalactosyl-diacylglycerol. These components contribute to regulate the properties and stability of the membrane. Catalyzes sequentially the transfers of glucosyl or galactosyl residues from UDP-Glc or UDP-Gal to diacylglycerol (DAG) acceptor to form the corresponding beta-glycosyl-DAG (3-O-(beta-D-glycopyranosyl)-1,2-diacyl-sn-glycerol). Then, only beta-galactosyl-DAG (3-O-(beta-D-galactopyranosyl)-1,2-diacyl-sn-glycerol) can act as acceptor to give the beta-glycosyl-beta-galactosyl-DAG product (3-O-(beta-D-glycopyranosyl-(1-&gt;6)-D-galactopyranosyl)-1,2-diacyl-sn-glycerol). It can also use alpha-Gal-beta-Gal-DAG, ceramide (Cer) and beta-Gal-Cer as sugar acceptors. The enzyme is supposed to be mainly a galactosyltransferase, with higher glycosyltransferase activity for the addition of the second glycosyl on beta-Gal-DAG as acceptor. The main glycolipid produced in vivo is beta-Glc-beta-Gal-DAG with a beta-1,6 linkage. In Mycoplasma pneumoniae (strain ATCC 29342 / M129 / Subtype 1) (Mycoplasmoides pneumoniae), this protein is Processive diacylglycerol beta-glycosyltransferase.